The chain runs to 87 residues: Translation initiation factor IF-1 2 (87 aa).

The 72-residue stretch at M1–T72 folds into the S1-like domain. The disordered stretch occupies residues G65–R87.

The protein belongs to the IF-1 family. As to quaternary structure, component of the 30S ribosomal translation pre-initiation complex which assembles on the 30S ribosome in the order IF-2 and IF-3, IF-1 and N-formylmethionyl-tRNA(fMet); mRNA recruitment can occur at any time during PIC assembly.

The protein resides in the cytoplasm. Functionally, one of the essential components for the initiation of protein synthesis. Stabilizes the binding of IF-2 and IF-3 on the 30S subunit to which N-formylmethionyl-tRNA(fMet) subsequently binds. Helps modulate mRNA selection, yielding the 30S pre-initiation complex (PIC). Upon addition of the 50S ribosomal subunit IF-1, IF-2 and IF-3 are released leaving the mature 70S translation initiation complex. The protein is Translation initiation factor IF-1 2 of Nitratidesulfovibrio vulgaris (strain ATCC 29579 / DSM 644 / CCUG 34227 / NCIMB 8303 / VKM B-1760 / Hildenborough) (Desulfovibrio vulgaris).